The following is a 143-amino-acid chain: MLVLRNLLALVTLALLFTLSSAQYTLSVSNSASGSKCTTAVSAKLNACNTGCLNSFNIVESSNGKGLVFKTFINAACSGEYESLSQFTCAANQKIPTTSYIVSCNSTPSSNSTTDSDSSSGSTVMIGLASSLLFAFATLLALF.

The signal sequence occupies residues 1-22 (MLVLRNLLALVTLALLFTLSSA). Residue Asn-111 is glycosylated (N-linked (GlcNAc...) asparagine). Ser-118 carries GPI-like-anchor amidated serine lipidation. Positions 119–143 (SSGSTVMIGLASSLLFAFATLLALF) are cleaved as a propeptide — removed in mature form.

Belongs to the ponticulin family. As to quaternary structure, monomer. In terms of processing, disulfide bond(s) stabilize the native, actin-binding conformation of ponticulin. Post-translationally, the GPI-like-anchor contains a phosphoceramide group, rather than a phosphatidyl group.

Its subcellular location is the cell membrane. Binds F-actin and nucleates actin assembly. Major high affinity link between the plasma membrane and the cortical actin network. This Dictyostelium discoideum (Social amoeba) protein is Ponticulin (ponA).